A 669-amino-acid chain; its full sequence is Protein fem-1 homolog A (669 aa).

7 ANK repeats span residues 2–31 (DLRT…REEL), 40–70 (GGGT…SVEA), 82–111 (EGAP…SVNR), 115–145 (TNST…DLEV), 149–178 (HGHT…QVNR), 182–211 (KGNT…RMER), and 214–243 (YGMT…GQEQ). Ser-108 carries the post-translational modification Phosphoserine. The tract at residues 240–278 (GQEQVAGGEAQPGLPQEDPSTSQGCAQPQGAPCCSSSPE) is disordered. TPR repeat units follow at residues 298–332 (VEAL…RHQG) and 390–423 (SYYI…QQSN). 2 ANK repeats span residues 534-576 (NGFT…DPDS) and 580-609 (DNNT…HMDA).

Belongs to the fem-1 family. Component of a CRL2 E3 ubiquitin-protein ligase complex, also named ECS (Elongin BC-CUL2/5-SOCS-box protein) complex, composed of CUL2, Elongin BC (ELOB and ELOC), RBX1 and substrate-specific adapter FEM1A. Interacts with PTGER4. Interacts with NFKB1; the interaction is direct. In terms of processing, phosphorylated; highly phosphorylated in myoblasts and myotubes. Phosphorylation at Ser-108 promotes PGE2-EP4-mediated inhibition of inflammation. Dephosphorylated by protein phosphatase 2A (PP2A). As to expression, present in macrophages derived from peripheral blood monocytes. Also present in atheromata (at protein level).

It is found in the mitochondrion. Its subcellular location is the cytoplasm. It participates in protein modification; protein ubiquitination. In terms of biological role, substrate-recognition component of a Cul2-RING (CRL2) E3 ubiquitin-protein ligase complex of the DesCEND (destruction via C-end degrons) pathway, which recognizes a C-degron located at the extreme C terminus of target proteins, leading to their ubiquitination and degradation. The C-degron recognized by the DesCEND pathway is usually a motif of less than ten residues and can be present in full-length proteins, truncated proteins or proteolytically cleaved forms. The CRL2(FEM1A) complex specifically recognizes proteins with an arginine at the C-terminus: recognizes and binds proteins ending with -Lys/Arg-Xaa-Arg and -Lys/Arg-Xaa-Xaa-Arg C-degrons, such as SIL1 or OR51B2, leading to their ubiquitination and degradation. Promotes ubiquitination and degradation of SLBP. Involved in PGE2-EP4-mediated inhibition of inflammation of macrophages via interaction with NFKB1 and PTGER4. Promotes inflammation in brain microglia through MAP2K4/MKK4-mediated signaling. The polypeptide is Protein fem-1 homolog A (Homo sapiens (Human)).